The chain runs to 495 residues: Glutamate--tRNA ligase (495 aa).

The 'HIGH' region motif lies at 12–22 (PSPTGHLHIGN). The 'KMSKS' region signature appears at 259–263 (KLSKR). Residue Lys-262 coordinates ATP.

This sequence belongs to the class-I aminoacyl-tRNA synthetase family. Glutamate--tRNA ligase type 1 subfamily. As to quaternary structure, monomer.

Its subcellular location is the cytoplasm. The enzyme catalyses tRNA(Glu) + L-glutamate + ATP = L-glutamyl-tRNA(Glu) + AMP + diphosphate. Its function is as follows. Catalyzes the attachment of glutamate to tRNA(Glu) in a two-step reaction: glutamate is first activated by ATP to form Glu-AMP and then transferred to the acceptor end of tRNA(Glu). This Latilactobacillus sakei subsp. sakei (strain 23K) (Lactobacillus sakei subsp. sakei) protein is Glutamate--tRNA ligase.